We begin with the raw amino-acid sequence, 211 residues long: tRNA (guanine-N(7)-)-methyltransferase (211 aa).

Positions 44, 69, 96, and 118 each coordinate S-adenosyl-L-methionine. Asp118 is an active-site residue. Substrate is bound at residue Lys122. The segment at 124 to 129 (KHEKRR) is interaction with RNA. Substrate is bound by residues Asp154 and 191 to 194 (TEYE).

This sequence belongs to the class I-like SAM-binding methyltransferase superfamily. TrmB family.

The catalysed reaction is guanosine(46) in tRNA + S-adenosyl-L-methionine = N(7)-methylguanosine(46) in tRNA + S-adenosyl-L-homocysteine. Its pathway is tRNA modification; N(7)-methylguanine-tRNA biosynthesis. Its function is as follows. Catalyzes the formation of N(7)-methylguanine at position 46 (m7G46) in tRNA. In Streptococcus pyogenes serotype M6 (strain ATCC BAA-946 / MGAS10394), this protein is tRNA (guanine-N(7)-)-methyltransferase.